Here is a 102-residue protein sequence, read N- to C-terminus: Large ribosomal subunit protein bL21 (102 aa).

Belongs to the bacterial ribosomal protein bL21 family. In terms of assembly, part of the 50S ribosomal subunit. Contacts protein L20.

In terms of biological role, this protein binds to 23S rRNA in the presence of protein L20. This Syntrophotalea carbinolica (strain DSM 2380 / NBRC 103641 / GraBd1) (Pelobacter carbinolicus) protein is Large ribosomal subunit protein bL21.